Consider the following 181-residue polypeptide: Alkyl hydroperoxide reductase AhpD (181 aa).

C131 functions as the Proton donor in the catalytic mechanism. An intrachain disulfide couples C131 to C134. The active-site Cysteine sulfenic acid (-SOH) intermediate is C134.

It belongs to the AhpD family.

The enzyme catalyses N(6)-[(R)-dihydrolipoyl]-L-lysyl-[lipoyl-carrier protein] + a hydroperoxide = N(6)-[(R)-lipoyl]-L-lysyl-[lipoyl-carrier protein] + an alcohol + H2O. Functionally, antioxidant protein with alkyl hydroperoxidase activity. Required for the reduction of the AhpC active site cysteine residues and for the regeneration of the AhpC enzyme activity. The protein is Alkyl hydroperoxide reductase AhpD of Bradyrhizobium sp. (strain ORS 278).